The sequence spans 226 residues: Clarin-3 (226 aa).

A helical membrane pass occupies residues 8–28 (LMFLSGFLTSLGSVVVICSIL). A glycan (N-linked (GlcNAc...) asparagine) is linked at Asn-46. 3 consecutive transmembrane segments (helical) span residues 92 to 112 (VVIL…VFTF), 128 to 148 (GVYT…VLFV), and 181 to 201 (FWLT…IIFY).

This sequence belongs to the clarin family.

Its subcellular location is the membrane. This is Clarin-3 (Clrn3) from Mus musculus (Mouse).